Consider the following 287-residue polypeptide: Urease accessory protein UreD (287 aa).

This sequence belongs to the UreD family. UreD, UreF and UreG form a complex that acts as a GTP-hydrolysis-dependent molecular chaperone, activating the urease apoprotein by helping to assemble the nickel containing metallocenter of UreC. The UreE protein probably delivers the nickel.

It localises to the cytoplasm. Its function is as follows. Required for maturation of urease via the functional incorporation of the urease nickel metallocenter. The sequence is that of Urease accessory protein UreD from Herpetosiphon aurantiacus (strain ATCC 23779 / DSM 785 / 114-95).